The primary structure comprises 131 residues: Methylglyoxal synthase (131 aa).

One can recognise an MGS-like domain in the interval 1–131 (MKIALIAHDK…GDLDYRKLRK (131 aa)). Substrate-binding positions include His8, Lys12, 34-37 (TGTT), and 54-55 (SG). The active-site Proton donor/acceptor is the Asp60. Residue His87 coordinates substrate.

It belongs to the methylglyoxal synthase family.

It catalyses the reaction dihydroxyacetone phosphate = methylglyoxal + phosphate. In terms of biological role, catalyzes the formation of methylglyoxal from dihydroxyacetone phosphate. The chain is Methylglyoxal synthase from Bacillus mycoides (strain KBAB4) (Bacillus weihenstephanensis).